An 82-amino-acid chain; its full sequence is Small ribosomal subunit protein uS17 (82 aa).

It belongs to the universal ribosomal protein uS17 family. Part of the 30S ribosomal subunit.

One of the primary rRNA binding proteins, it binds specifically to the 5'-end of 16S ribosomal RNA. The sequence is that of Small ribosomal subunit protein uS17 from Rhodopseudomonas palustris (strain BisA53).